Reading from the N-terminus, the 180-residue chain is GTP cyclohydrolase 1 (180 aa).

Residues Cys-71, His-74, and Cys-142 each contribute to the Zn(2+) site.

The protein belongs to the GTP cyclohydrolase I family. As to quaternary structure, toroid-shaped homodecamer, composed of two pentamers of five dimers.

The enzyme catalyses GTP + H2O = 7,8-dihydroneopterin 3'-triphosphate + formate + H(+). Its pathway is cofactor biosynthesis; 7,8-dihydroneopterin triphosphate biosynthesis; 7,8-dihydroneopterin triphosphate from GTP: step 1/1. The protein is GTP cyclohydrolase 1 (folE) of Helicobacter pylori (strain J99 / ATCC 700824) (Campylobacter pylori J99).